We begin with the raw amino-acid sequence, 330 residues long: Sulfate/thiosulfate import ATP-binding protein CysA (330 aa).

In terms of domain architecture, ABC transporter spans 3–237 (IEIRNINKQF…PASEFVYHFL (235 aa)). 35-42 (GPSGCGKT) serves as a coordination point for ATP.

Belongs to the ABC transporter superfamily. Sulfate/tungstate importer (TC 3.A.1.6) family. As to quaternary structure, the complex is composed of two ATP-binding proteins (CysA), two transmembrane proteins (CysT and CysW) and a solute-binding protein (CysP).

The protein localises to the cell inner membrane. It carries out the reaction sulfate(out) + ATP + H2O = sulfate(in) + ADP + phosphate + H(+). The enzyme catalyses thiosulfate(out) + ATP + H2O = thiosulfate(in) + ADP + phosphate + H(+). Part of the ABC transporter complex CysAWTP involved in sulfate/thiosulfate import. Responsible for energy coupling to the transport system. This chain is Sulfate/thiosulfate import ATP-binding protein CysA, found in Pectobacterium atrosepticum (strain SCRI 1043 / ATCC BAA-672) (Erwinia carotovora subsp. atroseptica).